We begin with the raw amino-acid sequence, 341 residues long: Diguanylate cyclase DgcP (341 aa).

The GAF domain occupies 18 to 154; the sequence is SLESLVRQLL…LFAGLIAQYI (137 aa). One can recognise a GGDEF domain in the interval 204-337; the sequence is HKIMIAFIDL…KQKTPFVAHP (134 aa). Asp-212 serves as a coordination point for Mg(2+). Positions 220, 225, and 229 each coordinate substrate. Residue Asp-255 coordinates Mg(2+). Catalysis depends on Asp-255, which acts as the Proton acceptor.

Homodimer. Requires Mg(2+) as cofactor.

The catalysed reaction is 2 GTP = 3',3'-c-di-GMP + 2 diphosphate. It functions in the pathway purine metabolism; 3',5'-cyclic di-GMP biosynthesis. Catalyzes the synthesis of cyclic-di-GMP (c-di-GMP) via the condensation of 2 GTP molecules. Cyclic-di-GMP is a second messenger which controls cell surface-associated traits in bacteria. The chain is Diguanylate cyclase DgcP from Escherichia coli (strain K12).